Here is a 361-residue protein sequence, read N- to C-terminus: MAAADEPKPKKLKVEAPQALSENVLFGMGNPLLDISAVVDKDFLDKYSLKPNDQILAEDKHKELFDELVKKFKVEYHAGGSTQNSMKVAQWLIQEPHKAATFFGCIGIDKFGEILKRKAADAHVDAHYYEQNEQPTGTCAACITGGNRSLVANLAAANCYKKEKHLDLERNWVLVEKARVYYIAGFFLTVSPESVLKVARYAAENNRVFTLNLSAPFISQFFKEALMDVMPYVDILFGNETEAATFAREQGFETKDIKEIAKKAQALPKVNSKRQRTVIFTQGRDDTIVAAENDVTAFPVLDQNQEEIIDTNGAGDAFVGGFLSQLVSDKPLTECIRAGHYAASVIIRRTGCTFPEKPDFH.

A Nuclear localization signal motif is present at residues 7-15 (PKPKKLKVE). Residue aspartate 34 participates in adenosine binding. Residue serine 48 coordinates Mg(2+). Position 76 is a phosphotyrosine (tyrosine 76). A Mg(2+)-binding site is contributed by asparagine 147. Glutamine 305 lines the adenosine pocket. Aspartate 316 is a catalytic residue. The active-site Proton acceptor is aspartate 316.

It belongs to the carbohydrate kinase PfkB family. Monomer. Mg(2+) serves as cofactor. In terms of tissue distribution, widely expressed. Highly expressed in liver, testis, kidney and spleen (at protein level). In brain, expression in most forebrain structures and the cerebellum is higher than in the midbrain and brainstem (at protein level). Major isoform in testis and kidney. Not detected in most brain regions, except in the cerebellum, where it is expressed at a similar level to that of isoform 2 (at protein level). As to expression, major isoform in spleen and in most brain regions, except in the cerebellum, where it is expressed at a similar level to that of isoform 1 (at protein level).

It is found in the nucleus. The protein localises to the cytoplasm. It catalyses the reaction adenosine + ATP = AMP + ADP + H(+). The protein operates within purine metabolism; AMP biosynthesis via salvage pathway; AMP from adenosine: step 1/1. Activity is inhibited by 5-iodotubercidin and 5'-amino-5'-deoxyadenosine. Functionally, catalyzes the phosphorylation of the purine nucleoside adenosine at the 5' position in an ATP-dependent manner. Serves as a potential regulator of concentrations of extracellular adenosine and intracellular adenine nucleotides. In Mus musculus (Mouse), this protein is Adenosine kinase (Adk).